Reading from the N-terminus, the 415-residue chain is Gamma-glutamyl phosphate reductase (415 aa).

The protein belongs to the gamma-glutamyl phosphate reductase family.

The protein resides in the cytoplasm. The enzyme catalyses L-glutamate 5-semialdehyde + phosphate + NADP(+) = L-glutamyl 5-phosphate + NADPH + H(+). The protein operates within amino-acid biosynthesis; L-proline biosynthesis; L-glutamate 5-semialdehyde from L-glutamate: step 2/2. Functionally, catalyzes the NADPH-dependent reduction of L-glutamate 5-phosphate into L-glutamate 5-semialdehyde and phosphate. The product spontaneously undergoes cyclization to form 1-pyrroline-5-carboxylate. This is Gamma-glutamyl phosphate reductase from Bacillus mycoides (strain KBAB4) (Bacillus weihenstephanensis).